Here is a 212-residue protein sequence, read N- to C-terminus: Protein DEPP1 (212 aa).

Disordered regions lie at residues 20 to 39 (EEMLLGGPGQEPPPSPSLDD), 49 to 79 (QPTSVLDKATAQGQPRPPHRPAQACRKGRPA), and 113 to 176 (QEKQ…SDLR). Residues 113–124 (QEKQPSQRDLPR) are compositionally biased toward basic and acidic residues.

In terms of tissue distribution, expressed in various tissues, including pancreas, placenta, ovary, testis and kidney.

It is found in the cytoplasm. The protein localises to the peroxisome. It localises to the mitochondrion. Functionally, acts as a critical modulator of FOXO3-induced autophagy via increased cellular ROS. In Homo sapiens (Human), this protein is Protein DEPP1.